The primary structure comprises 345 residues: Phosphate acyltransferase (345 aa).

Belongs to the PlsX family. Homodimer. Probably interacts with PlsY.

Its subcellular location is the cytoplasm. The catalysed reaction is a fatty acyl-[ACP] + phosphate = an acyl phosphate + holo-[ACP]. The protein operates within lipid metabolism; phospholipid metabolism. Functionally, catalyzes the reversible formation of acyl-phosphate (acyl-PO(4)) from acyl-[acyl-carrier-protein] (acyl-ACP). This enzyme utilizes acyl-ACP as fatty acyl donor, but not acyl-CoA. In Chromobacterium violaceum (strain ATCC 12472 / DSM 30191 / JCM 1249 / CCUG 213 / NBRC 12614 / NCIMB 9131 / NCTC 9757 / MK), this protein is Phosphate acyltransferase.